The sequence spans 1524 residues: DNA-directed RNA polymerase subunit beta' (1524 aa).

Positions 58, 60, 73, and 76 each coordinate Zn(2+). Residues Asp-739, Asp-741, and Asp-743 each coordinate Mg(2+). Cys-1112, Cys-1194, Cys-1201, and Cys-1204 together coordinate Zn(2+). Residues 1501–1524 (EAVEAKERPAARRGVKREQPGKQA) form a disordered region.

The protein belongs to the RNA polymerase beta' chain family. The RNAP catalytic core consists of 2 alpha, 1 beta, 1 beta' and 1 omega subunit. When a sigma factor is associated with the core the holoenzyme is formed, which can initiate transcription. It depends on Mg(2+) as a cofactor. Zn(2+) serves as cofactor.

It catalyses the reaction RNA(n) + a ribonucleoside 5'-triphosphate = RNA(n+1) + diphosphate. In terms of biological role, DNA-dependent RNA polymerase catalyzes the transcription of DNA into RNA using the four ribonucleoside triphosphates as substrates. This is DNA-directed RNA polymerase subunit beta' from Thermus thermophilus (strain ATCC BAA-163 / DSM 7039 / HB27).